We begin with the raw amino-acid sequence, 156 residues long: Small ribosomal subunit protein uS7 (156 aa).

It belongs to the universal ribosomal protein uS7 family. Part of the 30S ribosomal subunit. Contacts proteins S9 and S11.

Functionally, one of the primary rRNA binding proteins, it binds directly to 16S rRNA where it nucleates assembly of the head domain of the 30S subunit. Is located at the subunit interface close to the decoding center, probably blocks exit of the E-site tRNA. This is Small ribosomal subunit protein uS7 from Burkholderia ambifaria (strain MC40-6).